The chain runs to 229 residues: Orotidine 5'-phosphate decarboxylase (229 aa).

Residues Asp9, Lys31, Asp58–Thr67, Thr121, Arg179, Gln188, Gly208, and Arg209 contribute to the substrate site. The active-site Proton donor is the Lys60.

This sequence belongs to the OMP decarboxylase family. Type 1 subfamily. Homodimer.

The enzyme catalyses orotidine 5'-phosphate + H(+) = UMP + CO2. It functions in the pathway pyrimidine metabolism; UMP biosynthesis via de novo pathway; UMP from orotate: step 2/2. Its function is as follows. Catalyzes the decarboxylation of orotidine 5'-monophosphate (OMP) to uridine 5'-monophosphate (UMP). The protein is Orotidine 5'-phosphate decarboxylase of Lawsonia intracellularis (strain PHE/MN1-00).